A 396-amino-acid chain; its full sequence is Flavohemoprotein (396 aa).

A Globin domain is found at M1–E136. Heme b is bound at residue H85. Active-site charge relay system residues include Y95 and E135. The tract at residues G147 to I396 is reductase. The FAD-binding FR-type domain occupies R150 to D255. Residues Y188 and R204–S207 contribute to the FAD site. G268–P273 is an NADP(+) binding site. C389 to P392 serves as a coordination point for FAD.

The protein belongs to the globin family. Two-domain flavohemoproteins subfamily. In the C-terminal section; belongs to the flavoprotein pyridine nucleotide cytochrome reductase family. The cofactor is heme b. It depends on FAD as a cofactor.

The enzyme catalyses 2 nitric oxide + NADPH + 2 O2 = 2 nitrate + NADP(+) + H(+). The catalysed reaction is 2 nitric oxide + NADH + 2 O2 = 2 nitrate + NAD(+) + H(+). Is involved in NO detoxification in an aerobic process, termed nitric oxide dioxygenase (NOD) reaction that utilizes O(2) and NAD(P)H to convert NO to nitrate, which protects the bacterium from various noxious nitrogen compounds. Therefore, plays a central role in the inducible response to nitrosative stress. The chain is Flavohemoprotein from Photorhabdus laumondii subsp. laumondii (strain DSM 15139 / CIP 105565 / TT01) (Photorhabdus luminescens subsp. laumondii).